Consider the following 395-residue polypeptide: Inactive serine protease 54 (395 aa).

Positions 1–30 are cleaved as a signal peptide; that stretch reads MVSAAGLSGDGKMRGVLLVLLGLLYSSTSC. The Peptidase S1 domain occupies 37 to 269; the sequence is VFYGPDPKEG…YSKWITSKAE (233 aa). N123 carries an N-linked (GlcNAc...) asparagine glycan. 3 disulfides stabilise this stretch: C164–C227, C195–C205, and C217–C248. Positions 324–348 are disordered; sequence RLGNSSRDSLDVREKDVKESGRSPE. N327 carries an N-linked (GlcNAc...) asparagine glycan. Positions 331-345 are enriched in basic and acidic residues; the sequence is DSLDVREKDVKESGR.

The protein belongs to the peptidase S1 family. Plasma kallikrein subfamily.

It is found in the secreted. The chain is Inactive serine protease 54 (PRSS54) from Homo sapiens (Human).